Here is a 212-residue protein sequence, read N- to C-terminus: FMN-dependent NADH:quinone oxidoreductase (212 aa).

FMN contacts are provided by residues Ser10, 16–18, and 98–101; these read SFS and MWNF.

It belongs to the azoreductase type 1 family. Homodimer. FMN is required as a cofactor.

The enzyme catalyses 2 a quinone + NADH + H(+) = 2 a 1,4-benzosemiquinone + NAD(+). It catalyses the reaction N,N-dimethyl-1,4-phenylenediamine + anthranilate + 2 NAD(+) = 2-(4-dimethylaminophenyl)diazenylbenzoate + 2 NADH + 2 H(+). Functionally, quinone reductase that provides resistance to thiol-specific stress caused by electrophilic quinones. In terms of biological role, also exhibits azoreductase activity. Catalyzes the reductive cleavage of the azo bond in aromatic azo compounds to the corresponding amines. The chain is FMN-dependent NADH:quinone oxidoreductase from Desulfotalea psychrophila (strain LSv54 / DSM 12343).